The following is a 381-amino-acid chain: Glycerate kinase (381 aa).

Belongs to the glycerate kinase type-1 family.

The catalysed reaction is (R)-glycerate + ATP = (2R)-3-phosphoglycerate + ADP + H(+). The polypeptide is Glycerate kinase (glxK) (Bacillus cereus (strain ATCC 10987 / NRS 248)).